The following is a 352-amino-acid chain: Transcriptional regulatory protein AlgP (352 aa).

Residues 128 to 352 are disordered; the sequence is KALESRKAKP…SNGAAPTSAS (225 aa). Positions 138–341 are enriched in low complexity; sequence ATKPAAKAAA…SSAASATPAA (204 aa).

The promoter for a critical alginate biosynthetic gene, AlgD, encoding GDP-mannose dehydrogenase, is activated only under conditions reminiscent of the cystic fibrosis lung (i.e. under high osmolarity), and at least two regulatory genes, AlgP and AlgQ, have been implicated in this activation process. In Pseudomonas aeruginosa (strain ATCC 15692 / DSM 22644 / CIP 104116 / JCM 14847 / LMG 12228 / 1C / PRS 101 / PAO1), this protein is Transcriptional regulatory protein AlgP (algP).